Here is a 329-residue protein sequence, read N- to C-terminus: uncharacterized protein (329 aa).

It to type I restriction system adenine methylases.

This is an uncharacterized protein from Bacillus subtilis (strain 168).